The sequence spans 178 residues: Actin-related protein 2/3 complex subunit 3-B (178 aa).

This sequence belongs to the ARPC3 family. Component of the Arp2/3 complex composed of actr2/arp2, actr3/arp3, arpc1 (arpc1a or arpc1b), arpc2, arpc3, arpc4 and arpc5.

It localises to the cytoplasm. The protein localises to the cytoskeleton. It is found in the cell projection. The protein resides in the nucleus. Component of the Arp2/3 complex, a multiprotein complex that mediates actin polymerization upon stimulation by nucleation-promoting factor (NPF). The Arp2/3 complex mediates the formation of branched actin networks in the cytoplasm, providing the force for cell motility. In addition to its role in the cytoplasmic cytoskeleton, the Arp2/3 complex also promotes actin polymerization in the nucleus, thereby regulating gene transcription and repair of damaged DNA. The Arp2/3 complex promotes homologous recombination (HR) repair in response to DNA damage by promoting nuclear actin polymerization, leading to drive motility of double-strand breaks (DSBs). This Xenopus laevis (African clawed frog) protein is Actin-related protein 2/3 complex subunit 3-B (arpc3-b).